The following is a 528-amino-acid chain: Probable serine protease HtrA1 (528 aa).

Positions 1–70 (MDTRVDTDNA…RPSGVQGSFV (70 aa)) are disordered. At 1–178 (MDTRVDTDNA…DVLFGGKVSY (178 aa)) the chain is on the cytoplasmic side. Gly residues predominate over residues 31 to 40 (NNGGPNGGGR). A helical transmembrane segment spans residues 179-199 (LALGILVAIALVIGGIGGVIG). Residues 200-528 (RKTAEVVDAF…LTVKPDPDST (329 aa)) are Periplasmic-facing. Active-site charge relay system residues include histidine 270, aspartate 306, and serine 387. The region spanning 426–487 (LVANSLIKDG…VIVKVGNRAV (62 aa)) is the PDZ domain.

The protein belongs to the peptidase S1C family. In terms of assembly, the C-terminal region exhibits both monomeric and trimeric forms in solution.

Its subcellular location is the cell inner membrane. The enzyme catalyses Acts on substrates that are at least partially unfolded. The cleavage site P1 residue is normally between a pair of hydrophobic residues, such as Val-|-Val.. Functionally, essential protein that may act as a regulatory protease that is conditionally activated upon appropriate environmental triggers. This Mycobacterium tuberculosis (strain ATCC 25618 / H37Rv) protein is Probable serine protease HtrA1.